The following is a 707-amino-acid chain: Matrix metalloproteinase-9 (707 aa).

The N-terminal stretch at 1–19 is a signal peptide; the sequence is MSLWQPLVLVLLVLGCCFA. Residues 20–93 constitute a propeptide, activation peptide; sequence APRQRQSTLV…GELDSATLKA (74 aa). The N-linked (GlcNAc...) asparagine glycan is linked to N38. The short motif at 97–104 is the Cysteine switch element; it reads PRCGVPDL. C99 serves as a coordination point for Zn(2+). 2 N-linked (GlcNAc...) asparagine glycosylation sites follow: N120 and N127. Residues D131 and D165 each contribute to the Ca(2+) site. Residues H175 and D177 each coordinate Zn(2+). Residues D182, G183, D185, and L187 each contribute to the Ca(2+) site. A Zn(2+)-binding site is contributed by H190. Ca(2+)-binding residues include G197, Q199, and D201. H203 contacts Zn(2+). Positions 205, 206, and 208 each coordinate Ca(2+). Fibronectin type-II domains follow at residues 225-273, 283-331, and 342-390; these read ADGA…FCPS, ADGK…FCPT, and SAGE…FCPD. 6 cysteine pairs are disulfide-bonded: C230-C256, C244-C271, C288-C314, C302-C329, C347-C373, and C361-C388. H401 lines the Zn(2+) pocket. E402 is an active-site residue. Residues H405 and H411 each coordinate Zn(2+). Residues 431–508 are disordered; it reads LHKDDVNGIR…AGPSTATTVP (78 aa). 2 stretches are compositionally biased toward pro residues: residues 452–475 and 486–499; these read RPPTTTTPQPTAPPTVCPTGPPTV and TGPPSAGPTGPPTA. The cysteines at positions 516 and 704 are disulfide-linked. Hemopexin repeat units lie at residues 518–563, 564–608, 610–657, and 658–704; these read VNIF…WPAL, PRKL…GLGA, VAQV…FPGV, and PLDT…ILQC.

It belongs to the peptidase M10A family. In terms of assembly, exists as monomer or homodimer; disulfide-linked. Also exists as heterodimer with LCN2. Macrophages and transformed cell lines produce only the monomeric form. Interacts with ECM1. As to quaternary structure, (Microbial infection) Interacts with Staphylococcus aureus protein SSL5; this interaction inhibits MMP9 activity. It depends on Zn(2+) as a cofactor. Ca(2+) is required as a cofactor. In terms of processing, processing of the precursor yields different active forms of 64, 67 and 82 kDa. Sequentially processing by MMP3 yields the 82 kDa matrix metalloproteinase-9. N- and O-glycosylated. As to expression, detected in neutrophils (at protein level). Produced by normal alveolar macrophages and granulocytes.

It is found in the secreted. It localises to the extracellular space. The protein resides in the extracellular matrix. It catalyses the reaction Cleavage of gelatin types I and V and collagen types IV and V.. Its activity is regulated as follows. Inhibited by histatin-3 1/24 (histatin-5). Inhibited by ECM1. Its function is as follows. Matrix metalloproteinase that plays an essential role in local proteolysis of the extracellular matrix and in leukocyte migration. Could play a role in bone osteoclastic resorption. Cleaves KiSS1 at a Gly-|-Leu bond. Cleaves NINJ1 to generate the Secreted ninjurin-1 form. Cleaves type IV and type V collagen into large C-terminal three quarter fragments and shorter N-terminal one quarter fragments. Degrades fibronectin but not laminin or Pz-peptide. This is Matrix metalloproteinase-9 (MMP9) from Homo sapiens (Human).